The chain runs to 132 residues: ATP synthase epsilon chain (132 aa).

It belongs to the ATPase epsilon chain family. F-type ATPases have 2 components, CF(1) - the catalytic core - and CF(0) - the membrane proton channel. CF(1) has five subunits: alpha(3), beta(3), gamma(1), delta(1), epsilon(1). CF(0) has three main subunits: a, b and c.

It is found in the cell membrane. Produces ATP from ADP in the presence of a proton gradient across the membrane. The sequence is that of ATP synthase epsilon chain from Desulfitobacterium hafniense (strain DSM 10664 / DCB-2).